Consider the following 67-residue polypeptide: DNA-directed RNA polymerase subunit omega (67 aa).

The protein belongs to the RNA polymerase subunit omega family. RNAP is composed of a core of 2 alpha, a beta and a beta' subunit. The core is associated with a delta subunit, and at least one of epsilon or omega. When a sigma factor is associated with the core the holoenzyme is formed, which can initiate transcription.

It catalyses the reaction RNA(n) + a ribonucleoside 5'-triphosphate = RNA(n+1) + diphosphate. Its function is as follows. Promotes RNA polymerase assembly. Latches the N- and C-terminal regions of the beta' subunit thereby facilitating its interaction with the beta and alpha subunits. In vitro reconstitution experiments this subunit is dispensible. The polypeptide is DNA-directed RNA polymerase subunit omega (rpoZ) (Bacillus subtilis (strain 168)).